The chain runs to 410 residues: Methylamine dehydrogenase heavy chain (410 aa).

An N-terminal signal peptide occupies residues 1-35 (MTHAYTKVRQALCYGSATLGAAALAALIAAGSAAA).

The protein belongs to the aromatic amine dehydrogenase heavy chain family. As to quaternary structure, tetramer of two light and two heavy chains.

It localises to the periplasm. It catalyses the reaction 2 oxidized [amicyanin] + methylamine + H2O = 2 reduced [amicyanin] + formaldehyde + NH4(+) + 2 H(+). Functionally, methylamine dehydrogenase carries out the oxidation of methylamine. Electrons are passed from methylamine dehydrogenase to amicyanin. This Methylorubrum extorquens (strain ATCC 14718 / DSM 1338 / JCM 2805 / NCIMB 9133 / AM1) (Methylobacterium extorquens) protein is Methylamine dehydrogenase heavy chain (mauB).